A 2318-amino-acid polypeptide reads, in one-letter code: Neurogenic locus notch homolog protein 3 (2318 aa).

Over residues Met-1 to Leu-14 the composition is skewed to basic residues. Positions Met-1 to Pro-20 are disordered. A signal peptide spans Met-1–Ala-39. 3 EGF-like domains span residues Ala-40–Gln-78, Leu-79–Ser-119, and Gln-120–Gln-157. At Ala-40 to Pro-1643 the chain is on the extracellular side. 99 disulfides stabilise this stretch: Cys-43-Cys-55, Cys-49-Cys-66, Cys-68-Cys-77, Cys-83-Cys-94, Cys-88-Cys-107, Cys-109-Cys-118, Cys-124-Cys-135, Cys-129-Cys-145, Cys-147-Cys-156, Cys-163-Cys-175, Cys-169-Cys-184, Cys-186-Cys-195, Cys-202-Cys-213, Cys-207-Cys-223, Cys-225-Cys-234, Cys-241-Cys-252, Cys-246-Cys-261, Cys-263-Cys-272, Cys-279-Cys-292, Cys-286-Cys-301, Cys-303-Cys-312, Cys-319-Cys-330, Cys-324-Cys-339, Cys-341-Cys-350, Cys-356-Cys-367, Cys-361-Cys-378, Cys-380-Cys-389, Cys-396-Cys-409, Cys-403-Cys-418, Cys-420-Cys-429, Cys-436-Cys-447, Cys-441-Cys-456, Cys-458-Cys-467, Cys-474-Cys-485, Cys-479-Cys-494, Cys-496-Cys-505, Cys-512-Cys-523, Cys-517-Cys-532, Cys-534-Cys-543, Cys-550-Cys-560, Cys-555-Cys-569, Cys-571-Cys-580, Cys-587-Cys-598, Cys-592-Cys-607, Cys-609-Cys-618, Cys-625-Cys-635, Cys-630-Cys-644, Cys-646-Cys-655, Cys-662-Cys-673, Cys-667-Cys-682, Cys-684-Cys-693, Cys-700-Cys-710, Cys-705-Cys-719, Cys-721-Cys-730, Cys-739-Cys-750, Cys-744-Cys-759, Cys-761-Cys-770, Cys-776-Cys-787, Cys-781-Cys-797, Cys-799-Cys-808, Cys-815-Cys-827, Cys-821-Cys-836, Cys-838-Cys-847, Cys-854-Cys-865, Cys-859-Cys-874, Cys-876-Cys-885, Cys-892-Cys-902, Cys-897-Cys-911, Cys-913-Cys-922, Cys-929-Cys-940, Cys-934-Cys-949, Cys-951-Cys-960, Cys-967-Cys-978, Cys-972-Cys-987, Cys-989-Cys-998, Cys-1005-Cys-1016, Cys-1010-Cys-1023, Cys-1025-Cys-1034, Cys-1041-Cys-1062, Cys-1056-Cys-1071, Cys-1073-Cys-1082, Cys-1089-Cys-1100, Cys-1094-Cys-1109, Cys-1111-Cys-1120, Cys-1127-Cys-1138, Cys-1132-Cys-1147, Cys-1149-Cys-1158, Cys-1165-Cys-1183, Cys-1177-Cys-1192, Cys-1194-Cys-1203, Cys-1210-Cys-1223, Cys-1215-Cys-1233, Cys-1235-Cys-1244, Cys-1251-Cys-1262, Cys-1256-Cys-1276, Cys-1278-Cys-1287, Cys-1294-Cys-1305, Cys-1299-Cys-1314, and Cys-1316-Cys-1325. Residues Asp-159–Glu-196 enclose the EGF-like 4; calcium-binding domain. The 38-residue stretch at Pro-198–Glu-235 folds into the EGF-like 5 domain. Positions Asn-237–Thr-273 constitute an EGF-like 6; calcium-binding domain. The 39-residue stretch at Asp-275–Ser-313 folds into the EGF-like 7 domain. One can recognise an EGF-like 8; calcium-binding domain in the interval Asn-315–His-351. The EGF-like 9 domain occupies Leu-352–Asp-390. Positions Asp-392–Glu-430 constitute an EGF-like 10; calcium-binding domain. One can recognise an EGF-like 11; calcium-binding domain in the interval Asp-432–Glu-468. Residues Asp-470–Gln-506 form the EGF-like 12; calcium-binding domain. An EGF-like 13; calcium-binding domain is found at Asp-508–Glu-544. Positions Asn-546 to Glu-581 constitute an EGF-like 14; calcium-binding domain. An EGF-like 15; calcium-binding domain is found at Gln-583–Glu-619. Positions Asn-621–Asn-656 constitute an EGF-like 16; calcium-binding domain. Residues Glu-658 to Leu-694 form the EGF-like 17; calcium-binding domain. 3 EGF-like domains span residues Ala-696 to Ser-731, Ala-735 to Glu-771, and Val-772 to Gln-809. Positions Asp-811–Asp-848 constitute an EGF-like 21; calcium-binding domain. The region spanning Asp-850 to Ala-886 is the EGF-like 22; calcium-binding domain. In terms of domain architecture, EGF-like 23; calcium-binding spans Asp-888–Glu-923. EGF-like domains are found at residues Asp-925–Gln-961, Glu-963–Gln-999, Pro-1001–Asp-1035, Gln-1037–Glu-1083, and Glu-1085–Glu-1121. The EGF-like 29; calcium-binding domain occupies Asn-1123 to Glu-1159. The 44-residue stretch at Asn-1161–Glu-1204 folds into the EGF-like 30; calcium-binding domain. N-linked (GlcNAc...) asparagine glycosylation occurs at Asn-1180. 4 consecutive EGF-like domains span residues Asp-1206–Gln-1245, Ala-1247–Glu-1288, Val-1290–Arg-1326, and Thr-1336–Glu-1374. N-linked (GlcNAc...) asparagine glycosylation occurs at Asn-1337. 12 cysteine pairs are disulfide-bonded: Cys-1340–Cys-1351, Cys-1345–Cys-1362, Cys-1364–Cys-1373, Cys-1388–Cys-1411, Cys-1393–Cys-1406, Cys-1402–Cys-1418, Cys-1429–Cys-1452, Cys-1434–Cys-1447, Cys-1443–Cys-1459, Cys-1468–Cys-1494, Cys-1476–Cys-1489, and Cys-1485–Cys-1501. LNR repeat units follow at residues Cys-1388–Gln-1428, Cys-1429–Arg-1466, and Cys-1468–Pro-1506. N-linked (GlcNAc...) asparagine glycosylation is present at Asn-1439. The helical transmembrane segment at Leu-1644–Met-1664 threads the bilayer. Topologically, residues Val-1665–Ala-2318 are cytoplasmic. ANK repeat units follow at residues Thr-1839–Ala-1868, Ser-1872–Ala-1902, Asp-1906–Ala-1935, Leu-1939–Met-1968, and Lys-1972–Ile-2001. Disordered regions lie at residues Leu-2025–Cys-2045 and Gln-2058–Gly-2126. Residues Pro-2028 to Cys-2045 are compositionally biased toward low complexity. Arg-2174 bears the Omega-N-methylarginine mark. Over residues Ser-2184 to Pro-2193 the composition is skewed to low complexity. The disordered stretch occupies residues Ser-2184 to Ala-2318. The segment at His-2242 to Pro-2261 is PEST-like. Over residues Ser-2262–Ser-2282 the composition is skewed to low complexity. Residues Ser-2296 to Gly-2305 are compositionally biased toward polar residues.

It belongs to the NOTCH family. Interacts with PSMA1. Heterodimer of a C-terminal fragment N(TM) and a N-terminal fragment N(EC) which are probably linked by disulfide bonds. Interacts with MAML1, MAML2 and MAML3 which act as transcriptional coactivators for NOTCH3. Interacts with HIF1AN. Synthesized in the endoplasmic reticulum as an inactive form which is proteolytically cleaved by a furin-like convertase in the trans-Golgi network before it reaches the plasma membrane to yield an active, ligand-accessible form. Cleavage results in a C-terminal fragment N(TM) and a N-terminal fragment N(EC). Following ligand binding, it is cleaved by TNF-alpha converting enzyme (TACE) to yield a membrane-associated intermediate fragment called notch extracellular truncation (NEXT). This fragment is then cleaved by presenilin dependent gamma-secretase to release a notch-derived peptide containing the intracellular domain (NICD) from the membrane. Post-translationally, phosphorylated. In terms of processing, hydroxylated by HIF1AN. Proliferating neuroepithelium.

It is found in the cell membrane. The protein localises to the nucleus. In terms of biological role, functions as a receptor for membrane-bound ligands Jagged1, Jagged2 and Delta1 to regulate cell-fate determination. Upon ligand activation through the released notch intracellular domain (NICD) it forms a transcriptional activator complex with RBPJ/RBPSUH and activates genes of the enhancer of split locus. Affects the implementation of differentiation, proliferation and apoptotic programs. May play a role during CNS development. This is Neurogenic locus notch homolog protein 3 (Notch3) from Mus musculus (Mouse).